The primary structure comprises 346 residues: tRNA-specific 2-thiouridylase MnmA (346 aa).

Residue 6–13 (AMSGGTDS) coordinates ATP. The active-site Nucleophile is Cys-90. Cysteines 90 and 187 form a disulfide. Position 114 (Gly-114) interacts with ATP. The interval 137–139 (KDQ) is interaction with tRNA. Cys-187 serves as the catalytic Cysteine persulfide intermediate. Positions 292–293 (RY) are interaction with tRNA.

It belongs to the MnmA/TRMU family.

The protein localises to the cytoplasm. It carries out the reaction S-sulfanyl-L-cysteinyl-[protein] + uridine(34) in tRNA + AH2 + ATP = 2-thiouridine(34) in tRNA + L-cysteinyl-[protein] + A + AMP + diphosphate + H(+). Its function is as follows. Catalyzes the 2-thiolation of uridine at the wobble position (U34) of tRNA, leading to the formation of s(2)U34. The sequence is that of tRNA-specific 2-thiouridylase MnmA from Nitratidesulfovibrio vulgaris (strain DP4) (Desulfovibrio vulgaris).